The chain runs to 747 residues: Kinesin-like protein KIF3B (747 aa).

An N-acetylmethionine modification is found at Met1. An N-acetylserine; in Kinesin-like protein KIF3B, N-terminally processed modification is found at Ser2. The Kinesin motor domain occupies 9–340 (SVRVVVRCRP…LRYANRAKNI (332 aa)). 96–103 (GQTGTGKT) provides a ligand contact to ATP. Residues 346–579 (VNEDPKDALL…EQTQNELTRE (234 aa)) are a coiled coil. Disordered regions lie at residues 374 to 412 (IGRRKRREKRREGGGSGGGGEEEEEEGEEGEEEGDDKDD) and 699 to 747 (QVDA…LVPK). Acidic residues predominate over residues 393-411 (GEEEEEEGEEGEEEGDDKD). A globular region spans residues 580–747 (LKLKHLIIEN…YPQSRGLVPK (168 aa)). A compositionally biased stretch (polar residues) spans 701–710 (DASSFESTAN). Residues 711 to 721 (KKSKARPKSGR) are compositionally biased toward basic residues. The segment covering 722 to 735 (KSGSSSSSSGTPAS) has biased composition (low complexity).

This sequence belongs to the TRAFAC class myosin-kinesin ATPase superfamily. Kinesin family. Kinesin II subfamily. Heterodimer of KIF3A and KIF3B. KIF3A/KIF3B heterodimer interacts with KIFAP3 forming a heterotrimeric (KIF3A/KIF3B/KIFAP3) complex. Interacts directly with IFT20. Interacts with the SMC3 subunit of the cohesin complex. Interacts with FLCN.

The protein localises to the cytoplasm. It localises to the cytoskeleton. The protein resides in the cell projection. Its subcellular location is the cilium. It is found in the dendritic spine. Its function is as follows. Microtubule-based molecular motor that transport intracellular cargos, such as vesicles, organelles and protein complexes. Uses ATP hydrolysis to generate force to bind and move along the microtubule. Plays a role in cilia formation. Involved in photoreceptor integrity and opsin trafficking in rod photoreceptors. Transports vesicles containing N-methyl-D-aspartate (NMDA) receptor subunit GRIN2A into neuronal dendrites. This is Kinesin-like protein KIF3B (KIF3B) from Homo sapiens (Human).